The sequence spans 922 residues: Phosphoenolpyruvate carboxylase (922 aa).

The interval 1–20 (MTKTLHARPSAATDTTFAPP) is disordered. Active-site residues include histidine 142 and lysine 581.

It belongs to the PEPCase type 1 family. It depends on Mg(2+) as a cofactor.

It catalyses the reaction oxaloacetate + phosphate = phosphoenolpyruvate + hydrogencarbonate. Forms oxaloacetate, a four-carbon dicarboxylic acid source for the tricarboxylic acid cycle. This Methylorubrum extorquens (strain ATCC 14718 / DSM 1338 / JCM 2805 / NCIMB 9133 / AM1) (Methylobacterium extorquens) protein is Phosphoenolpyruvate carboxylase (ppc).